Reading from the N-terminus, the 1009-residue chain is Kinesin-like protein KIN-5C (1009 aa).

In terms of domain architecture, Kinesin motor spans 12–359 (NVQVLLRCRP…LDYAHRAKNI (348 aa)). 98-105 (GQTGTGKT) contacts ATP. A coiled-coil region spans residues 406–526 (YQEESERKVM…NSSLHQKIGR (121 aa)). Disordered stretches follow at residues 862–882 (SNEQHDAEVDSARTAAEKDVT) and 987–1009 (YESFATKETKPQQLTRSPLSQVN). 2 stretches are compositionally biased toward basic and acidic residues: residues 863–882 (NEQHDAEVDSARTAAEKDVT) and 987–996 (YESFATKETK). A compositionally biased stretch (polar residues) spans 997 to 1009 (PQQLTRSPLSQVN).

It belongs to the TRAFAC class myosin-kinesin ATPase superfamily. Kinesin family. KIN-5/BimC subfamily.

It localises to the cytoplasm. The protein resides in the cytoskeleton. It is found in the spindle. In terms of biological role, responsible for microtubule translocation. May be important for the organization of phragmoplast-specific arrays of microtubules. Plays an essential role in stabilizing the mitotic spindle. Required during mitotic cytokinesis. The polypeptide is Kinesin-like protein KIN-5C (Arabidopsis thaliana (Mouse-ear cress)).